Consider the following 171-residue polypeptide: UPF0763 protein Hac_0849 (171 aa).

The protein belongs to the UPF0763 family.

The chain is UPF0763 protein Hac_0849 from Helicobacter acinonychis (strain Sheeba).